The following is a 147-amino-acid chain: NADH-quinone oxidoreductase subunit A (147 aa).

Helical transmembrane passes span 16–36 (FAIFLIIAIGLCCLMLVGGWF), 68–88 (FYLVAMFFVIFDVEALYLFAW), and 98–118 (VGFVEAAIFIFVLLAGLVYLV).

The protein belongs to the complex I subunit 3 family. In terms of assembly, NDH-1 is composed of 13 different subunits. Subunits NuoA, H, J, K, L, M, N constitute the membrane sector of the complex.

It is found in the cell inner membrane. It catalyses the reaction a quinone + NADH + 5 H(+)(in) = a quinol + NAD(+) + 4 H(+)(out). In terms of biological role, NDH-1 shuttles electrons from NADH, via FMN and iron-sulfur (Fe-S) centers, to quinones in the respiratory chain. The immediate electron acceptor for the enzyme in this species is believed to be ubiquinone. Couples the redox reaction to proton translocation (for every two electrons transferred, four hydrogen ions are translocated across the cytoplasmic membrane), and thus conserves the redox energy in a proton gradient. This Citrobacter koseri (strain ATCC BAA-895 / CDC 4225-83 / SGSC4696) protein is NADH-quinone oxidoreductase subunit A.